Reading from the N-terminus, the 70-residue chain is Putative RNA-binding protein YbcJ (70 aa).

Positions valine 12–valine 68 constitute an S4 RNA-binding domain.

In terms of assembly, in pull-down experiments interacts with CedA.

Its function is as follows. Its structure and the presence of conserved basic residues indicates that it probably binds RNA. The polypeptide is Putative RNA-binding protein YbcJ (ybcJ) (Escherichia coli (strain K12)).